The sequence spans 197 residues: 3-isopropylmalate dehydratase small subunit (197 aa).

The protein belongs to the LeuD family. LeuD type 1 subfamily. Heterodimer of LeuC and LeuD.

The enzyme catalyses (2R,3S)-3-isopropylmalate = (2S)-2-isopropylmalate. Its pathway is amino-acid biosynthesis; L-leucine biosynthesis; L-leucine from 3-methyl-2-oxobutanoate: step 2/4. Functionally, catalyzes the isomerization between 2-isopropylmalate and 3-isopropylmalate, via the formation of 2-isopropylmaleate. The sequence is that of 3-isopropylmalate dehydratase small subunit from Streptococcus suis (strain 98HAH33).